A 61-amino-acid chain; its full sequence is Large ribosomal subunit protein uL30 (61 aa).

Belongs to the universal ribosomal protein uL30 family. Part of the 50S ribosomal subunit.

This is Large ribosomal subunit protein uL30 from Nitrosomonas eutropha (strain DSM 101675 / C91 / Nm57).